The sequence spans 964 residues: uncharacterized protein (964 aa).

Disordered stretches follow at residues 1–31 and 169–199; these read MDSE…SDCE and EETY…DEIS. A compositionally biased stretch (polar residues) spans 10-27; that stretch reads HSICNSVSSGENYKSPES. Positions 656-840 form a coiled coil; the sequence is EVMESLQVEI…LILNQTSMAK (185 aa).

This is an uncharacterized protein from Caenorhabditis elegans.